Reading from the N-terminus, the 272-residue chain is Rhomboid-type serine protease B (272 aa).

Helical transmembrane passes span 30–50 (IVLL…WSVV), 72–92 (PFIH…TPLL), 103–123 (TAVA…YILV), 133–153 (AVVG…IKTF), and 164–184 (TKIP…IFVP). Ser-138 serves as the catalytic Nucleophile. N-linked (GlcNAc...) asparagine glycosylation is present at Asn-185. A helical transmembrane segment spans residues 186–206 (TSFLGHLSAIIIGYLLGLGYL). His-191 is an active-site residue.

This sequence belongs to the peptidase S54 family.

Its subcellular location is the membrane. It catalyses the reaction Cleaves type-1 transmembrane domains using a catalytic dyad composed of serine and histidine that are contributed by different transmembrane domains.. In terms of biological role, rhomboid protease that catalyzes intramembrane proteolysis. Required for transcription factor srbA activation by mediating its release from the membrane and thereby regulating its activity under hypoxic conditions. Essential for iron homeostasis and resistance to azoles such as voriconazole. Required for virulence in murine models of invasive pulmonary aspergillosis (IPA). The chain is Rhomboid-type serine protease B from Aspergillus fumigatus (strain CBS 144.89 / FGSC A1163 / CEA10) (Neosartorya fumigata).